Here is a 215-residue protein sequence, read N- to C-terminus: Large ribosomal subunit protein uL3 (215 aa).

Residues 131 to 144 (SSSRASHGNSRSHN) show a composition bias toward low complexity. Residues 131–150 (SSSRASHGNSRSHNVPGSIG) are disordered. An N5-methylglutamine modification is found at glutamine 153.

It belongs to the universal ribosomal protein uL3 family. Part of the 50S ribosomal subunit. Forms a cluster with proteins L14 and L19. Post-translationally, methylated by PrmB.

In terms of biological role, one of the primary rRNA binding proteins, it binds directly near the 3'-end of the 23S rRNA, where it nucleates assembly of the 50S subunit. The polypeptide is Large ribosomal subunit protein uL3 (Nitrosomonas europaea (strain ATCC 19718 / CIP 103999 / KCTC 2705 / NBRC 14298)).